The following is a 720-amino-acid chain: Phosphate acetyltransferase (720 aa).

Positions A389–S720 are phosphate acetyltransferase.

This sequence in the N-terminal section; belongs to the CobB/CobQ family. It in the C-terminal section; belongs to the phosphate acetyltransferase and butyryltransferase family. In terms of assembly, homohexamer.

The protein resides in the cytoplasm. The enzyme catalyses acetyl-CoA + phosphate = acetyl phosphate + CoA. The protein operates within metabolic intermediate biosynthesis; acetyl-CoA biosynthesis; acetyl-CoA from acetate: step 2/2. Involved in acetate metabolism. This Acinetobacter baylyi (strain ATCC 33305 / BD413 / ADP1) protein is Phosphate acetyltransferase (pta).